A 199-amino-acid polypeptide reads, in one-letter code: Phosphoheptose isomerase (199 aa).

The SIS domain maps to 36–198 (MSQCLLNEHK…DRKLIPSSED (163 aa)). 51–53 (NGG) serves as a coordination point for substrate. Residues histidine 60 and glutamate 64 each contribute to the Zn(2+) site. Residues glutamate 64, 93–94 (ND), 119–121 (STS), serine 124, and glutamine 174 contribute to the substrate site. Residues glutamine 174 and histidine 182 each contribute to the Zn(2+) site.

It belongs to the SIS family. GmhA subfamily. Homotetramer. Zn(2+) serves as cofactor.

It is found in the cytoplasm. The catalysed reaction is 2 D-sedoheptulose 7-phosphate = D-glycero-alpha-D-manno-heptose 7-phosphate + D-glycero-beta-D-manno-heptose 7-phosphate. It functions in the pathway carbohydrate biosynthesis; D-glycero-D-manno-heptose 7-phosphate biosynthesis; D-glycero-alpha-D-manno-heptose 7-phosphate and D-glycero-beta-D-manno-heptose 7-phosphate from sedoheptulose 7-phosphate: step 1/1. Functionally, catalyzes the isomerization of sedoheptulose 7-phosphate in D-glycero-D-manno-heptose 7-phosphate. The sequence is that of Phosphoheptose isomerase from Coxiella burnetii (strain RSA 331 / Henzerling II).